Here is a 107-residue protein sequence, read N- to C-terminus: UPF0145 protein CHY_0465 (107 aa).

Belongs to the UPF0145 family.

This Carboxydothermus hydrogenoformans (strain ATCC BAA-161 / DSM 6008 / Z-2901) protein is UPF0145 protein CHY_0465.